The chain runs to 209 residues: Thiamine-phosphate synthase (209 aa).

4-amino-2-methyl-5-(diphosphooxymethyl)pyrimidine-binding positions include 38–42 (QYRDK) and Asn-70. Mg(2+) is bound by residues Asp-71 and Asp-89. Thr-108 contributes to the 4-amino-2-methyl-5-(diphosphooxymethyl)pyrimidine binding site. Position 135 to 137 (135 to 137 (SNT)) interacts with 2-[(2R,5Z)-2-carboxy-4-methylthiazol-5(2H)-ylidene]ethyl phosphate. Lys-138 provides a ligand contact to 4-amino-2-methyl-5-(diphosphooxymethyl)pyrimidine. Gly-165 contacts 2-[(2R,5Z)-2-carboxy-4-methylthiazol-5(2H)-ylidene]ethyl phosphate.

This sequence belongs to the thiamine-phosphate synthase family. It depends on Mg(2+) as a cofactor.

The enzyme catalyses 2-[(2R,5Z)-2-carboxy-4-methylthiazol-5(2H)-ylidene]ethyl phosphate + 4-amino-2-methyl-5-(diphosphooxymethyl)pyrimidine + 2 H(+) = thiamine phosphate + CO2 + diphosphate. It carries out the reaction 2-(2-carboxy-4-methylthiazol-5-yl)ethyl phosphate + 4-amino-2-methyl-5-(diphosphooxymethyl)pyrimidine + 2 H(+) = thiamine phosphate + CO2 + diphosphate. It catalyses the reaction 4-methyl-5-(2-phosphooxyethyl)-thiazole + 4-amino-2-methyl-5-(diphosphooxymethyl)pyrimidine + H(+) = thiamine phosphate + diphosphate. It participates in cofactor biosynthesis; thiamine diphosphate biosynthesis; thiamine phosphate from 4-amino-2-methyl-5-diphosphomethylpyrimidine and 4-methyl-5-(2-phosphoethyl)-thiazole: step 1/1. In terms of biological role, condenses 4-methyl-5-(beta-hydroxyethyl)thiazole monophosphate (THZ-P) and 2-methyl-4-amino-5-hydroxymethyl pyrimidine pyrophosphate (HMP-PP) to form thiamine monophosphate (TMP). The polypeptide is Thiamine-phosphate synthase (Ectopseudomonas mendocina (strain ymp) (Pseudomonas mendocina)).